Consider the following 472-residue polypeptide: Serine incorporator 3 (472 aa).

The Extracellular portion of the chain corresponds to 1–96 (MGAVLGVFSL…KDCDVLVGFK (96 aa)). Asn-34 carries an N-linked (GlcNAc...) asparagine glycan. Residues 97 to 117 (AVYRINFAVAIFFFAFFLLML) traverse the membrane as a helical segment. The Cytoplasmic segment spans residues 118–132 (KVKTSKDPRAAVHNG). A helical membrane pass occupies residues 133 to 153 (FWFFKIAAIIGIMIGSFYIPG). Topologically, residues 154-158 (GSFTE) are extracellular. A helical membrane pass occupies residues 159-179 (VWFVAGMLGASFFIIIQLVLL). Over 180–206 (VDMAHSWNELWVNRMEEGNPRLWYAAL) the chain is Cytoplasmic. The chain crosses the membrane as a helical span at residues 207–227 (LSFTSLFYILSIVFAALLYVF). The Extracellular portion of the chain corresponds to 228–238 (YTKPDDCTENK). Residues 239–259 (VFISLNLIFCVAVSIVSILPK) traverse the membrane as a helical segment. The Cytoplasmic segment spans residues 260 to 329 (VQEHQPRSGL…APAYAPPSQS (70 aa)). The chain crosses the membrane as a helical span at residues 330 to 350 (GHFMNLDDIWGLIIFVFCLIY). At 351-405 (SSFRTSSNSQVNKLTLSGSDSVILGDTTNGANDEEDGQPRRAVDNEKEGVQYSYS) the chain is on the extracellular side. Ser-371 carries the phosphoserine modification. Residues 406 to 426 (FFHLMLCCASLYIMMTITSWY) traverse the membrane as a helical segment. At 427 to 445 (SPDAKFQKVSSKWLAVWFK) the chain is on the cytoplasmic side. The chain crosses the membrane as a helical span at residues 446-466 (MGSSWLCLLLYLWTLVAPLVL). Residues 467-472 (TGRDFS) are Extracellular-facing.

Belongs to the TDE1 family. Post-translationally, N-glycosylated. Highly expressed in the neuronal populations such as Purkinje cells in the cerebellum, brainstem and spinal motor neurons, locus coeruleus and raphe nuclei. Highly expressed also in thymus, kidney liver and testis.

The protein localises to the cell membrane. The protein resides in the golgi apparatus membrane. It carries out the reaction a 1,2-diacyl-sn-glycero-3-phospho-L-serine(in) = a 1,2-diacyl-sn-glycero-3-phospho-L-serine(out). The enzyme catalyses a 1,2-diacyl-sn-glycero-3-phosphocholine(in) = a 1,2-diacyl-sn-glycero-3-phosphocholine(out). It catalyses the reaction a 1,2-diacyl-sn-glycero-3-phosphoethanolamine(in) = a 1,2-diacyl-sn-glycero-3-phosphoethanolamine(out). Restriction factor required to restrict infectivity of gammaretroviruses: acts by inhibiting an early step of viral infection. Impairs the penetration of the viral particle into the cytoplasm. Non-ATP-dependent, non-specific lipid transporter for phosphatidylserine, phosphatidylcholine, and phosphatidylethanolamine. Functions as a scramblase that flips lipids in both directions across the membrane. Phospholipid scrambling results in gammaretroviral surface exposure of phosphatidylserine and loss of membrane asymmetry, which leads to loss of infectivity. The polypeptide is Serine incorporator 3 (Serinc3) (Mus musculus (Mouse)).